We begin with the raw amino-acid sequence, 292 residues long: Aquaporin PIP1-3/PIP1-4 (292 aa).

The segment at 1 to 42 is disordered; the sequence is MEGKEEDVRLGANKFSERQPIGTAAQGAGAGDDDKDYKEPPP. 2 helical membrane passes run 61–81 and 96–118; these read IAEF…VMGV and IAWS…SGGH. The short motif at 120-122 is the NPA 1 element; it reads NPA. 3 helical membrane-spanning segments follow: residues 139–159, 181–201, and 215–235; these read IFYI…VKGF, GDGL…VFSA, and ILAP…TIPI. Positions 241–243 match the NPA 2 motif; sequence NPA. A helical transmembrane segment spans residues 263–283; that stretch reads IFWVGPFIGAALAAIYHQVII.

The protein belongs to the MIP/aquaporin (TC 1.A.8) family. PIP (TC 1.A.8.11) subfamily.

It is found in the cell membrane. In terms of biological role, aquaporins facilitate the transport of water and small neutral solutes across cell membranes. This Zea mays (Maize) protein is Aquaporin PIP1-3/PIP1-4 (PIP1-3).